Reading from the N-terminus, the 910-residue chain is NADH-quinone oxidoreductase subunit G (910 aa).

A 2Fe-2S ferredoxin-type domain is found at 1–83 (MAKIYVDGKA…GTIISINDDT (83 aa)). [2Fe-2S] cluster is bound by residues Cys-34, Cys-45, Cys-48, and Cys-67. In terms of domain architecture, 4Fe-4S His(Cys)3-ligated-type spans 83-122 (TSKKFRSNIVELLLTNHPHDCPVCEEGGNCHLQDMTVMTT). His-99, Cys-103, Cys-106, Cys-112, Cys-151, Cys-154, Cys-157, Cys-201, Cys-228, Cys-231, Cys-235, and Cys-263 together coordinate [4Fe-4S] cluster. A 4Fe-4S Mo/W bis-MGD-type domain is found at 221 to 277 (MQYAPGICQNCSIGCNISIGERYGEIRRIENRYHESINHYLICDLGRFGYSHTNLKN).

It belongs to the complex I 75 kDa subunit family. Composed of 13 different subunits. Subunits NuoCD, E, F, and G constitute the peripheral sector of the complex. Requires [2Fe-2S] cluster as cofactor. The cofactor is [4Fe-4S] cluster.

It catalyses the reaction a quinone + NADH + 5 H(+)(in) = a quinol + NAD(+) + 4 H(+)(out). In terms of biological role, NDH-1 shuttles electrons from NADH, via FMN and iron-sulfur (Fe-S) centers, to quinones in the respiratory chain. Couples the redox reaction to proton translocation (for every two electrons transferred, four hydrogen ions are translocated across the cytoplasmic membrane), and thus conserves the redox energy in a proton gradient. In Buchnera aphidicola subsp. Schizaphis graminum (strain Sg), this protein is NADH-quinone oxidoreductase subunit G (nuoG).